A 423-amino-acid chain; its full sequence is Lipid droplet-regulating VLDL assembly factor AUP1 (423 aa).

Residues 1-19 lie on the Cytoplasmic side of the membrane; the sequence is METRGIEQMFDFQRLPNDR. Residues 20 to 40 lie within the membrane without spanning it; the sequence is FILLLLLLYAPVGFCLMLLRI. At 41–423 the chain is on the cytoplasmic side; sequence FIGVHVFLVS…KHGLNKEDDL (383 aa). The 43-residue stretch at 304–346 folds into the CUE domain; the sequence is RIARLAQQVKEVLPDVPVSVITRDLLQTNCVDTTITNLLERTD. The segment at 355–392 is disordered; the sequence is TMPSGPGKAAASSTPSAMVSSPNLKPAAKSFGRSPIDR. Over residues 365 to 377 the composition is skewed to polar residues; the sequence is ASSTPSAMVSSPN.

The protein belongs to the AUP1 family.

The protein localises to the endoplasmic reticulum membrane. It is found in the lipid droplet. Plays a role in the translocation of terminally misfolded proteins from the endoplasmic reticulum lumen to the cytoplasm and their degradation by the proteasome. Plays a role in lipid droplet formation. Induces lipid droplet clustering. In Danio rerio (Zebrafish), this protein is Lipid droplet-regulating VLDL assembly factor AUP1.